Here is a 569-residue protein sequence, read N- to C-terminus: Dihydroxy-acid dehydratase (569 aa).

C61 is a binding site for [2Fe-2S] cluster. Residue D93 coordinates Mg(2+). Residue C134 coordinates [2Fe-2S] cluster. Mg(2+)-binding residues include D135 and K136. The residue at position 136 (K136) is an N6-carboxylysine. C211 is a [2Fe-2S] cluster binding site. Residue E462 participates in Mg(2+) binding. Residue S488 is the Proton acceptor of the active site.

The protein belongs to the IlvD/Edd family. As to quaternary structure, homodimer. The cofactor is [2Fe-2S] cluster. Mg(2+) is required as a cofactor.

It carries out the reaction (2R)-2,3-dihydroxy-3-methylbutanoate = 3-methyl-2-oxobutanoate + H2O. The enzyme catalyses (2R,3R)-2,3-dihydroxy-3-methylpentanoate = (S)-3-methyl-2-oxopentanoate + H2O. It participates in amino-acid biosynthesis; L-isoleucine biosynthesis; L-isoleucine from 2-oxobutanoate: step 3/4. It functions in the pathway amino-acid biosynthesis; L-valine biosynthesis; L-valine from pyruvate: step 3/4. Functions in the biosynthesis of branched-chain amino acids. Catalyzes the dehydration of (2R,3R)-2,3-dihydroxy-3-methylpentanoate (2,3-dihydroxy-3-methylvalerate) into 2-oxo-3-methylpentanoate (2-oxo-3-methylvalerate) and of (2R)-2,3-dihydroxy-3-methylbutanoate (2,3-dihydroxyisovalerate) into 2-oxo-3-methylbutanoate (2-oxoisovalerate), the penultimate precursor to L-isoleucine and L-valine, respectively. This chain is Dihydroxy-acid dehydratase, found in Tropheryma whipplei (strain TW08/27) (Whipple's bacillus).